The chain runs to 458 residues: UDP-N-acetylmuramoylalanine--D-glutamate ligase (458 aa).

Residue 119 to 125 participates in ATP binding; that stretch reads GSNGKTT.

This sequence belongs to the MurCDEF family.

Its subcellular location is the cytoplasm. It carries out the reaction UDP-N-acetyl-alpha-D-muramoyl-L-alanine + D-glutamate + ATP = UDP-N-acetyl-alpha-D-muramoyl-L-alanyl-D-glutamate + ADP + phosphate + H(+). It participates in cell wall biogenesis; peptidoglycan biosynthesis. Cell wall formation. Catalyzes the addition of glutamate to the nucleotide precursor UDP-N-acetylmuramoyl-L-alanine (UMA). This Limosilactobacillus fermentum (strain NBRC 3956 / LMG 18251) (Lactobacillus fermentum) protein is UDP-N-acetylmuramoylalanine--D-glutamate ligase.